A 158-amino-acid polypeptide reads, in one-letter code: L-alanine exporter AlaE (158 aa).

4 consecutive transmembrane segments (helical) span residues 23-43 (FAMV…VSGM), 53-73 (LVAI…RDAV), 92-112 (VIAY…FVGA), and 117-137 (IITA…AYGY).

The protein belongs to the AlaE exporter family.

Its subcellular location is the cell inner membrane. In terms of biological role, exports L-alanine. This chain is L-alanine exporter AlaE, found in Cronobacter sakazakii (strain ATCC BAA-894) (Enterobacter sakazakii).